A 542-amino-acid polypeptide reads, in one-letter code: Organic anion transporter 3 (542 aa).

The Cytoplasmic portion of the chain corresponds to 1–20 (MTFSEILDRVGSMGRFQFLH). Phosphoserine is present on Ser4. The helical transmembrane segment at 21 to 41 (VAILGLPILNMANHNLLQIFT) threads the bilayer. The Extracellular portion of the chain corresponds to 42–123 (AATPVHHCRP…LVCNSNKLKE (82 aa)). An N-linked (GlcNAc...) asparagine glycan is attached at Asn86. The chain crosses the membrane as a helical span at residues 124-144 (MAQSIFMAGILIGGLVLGDLS). The Cytoplasmic segment spans residues 145–154 (DRFGRRPILT). Residues 155 to 175 (CSYLLLAASGSGAAFSPTFPI) traverse the membrane as a helical segment. Residue Tyr176 is a topological domain, extracellular. A helical transmembrane segment spans residues 177 to 197 (MVFRFLCGFGISGITLSTVIL). Residues 198–212 (NVEWVPTRMRAIMST) are Cytoplasmic-facing. Residues 213–233 (ALGYCYTFGQFILPGLAYAIP) form a helical membrane-spanning segment. Residues 234-236 (QWR) are Extracellular-facing. The chain crosses the membrane as a helical span at residues 237-257 (WLQLTVSIPFFIFFLSSWWTP). Over 258–327 (ESIRWLVLSG…FRIPMLRRMT (70 aa)) the chain is Cytoplasmic. Residues 328 to 348 (FCLSLAWFATGFAYYSLAMGV) traverse the membrane as a helical segment. Topologically, residues 349–354 (EEFGVN) are extracellular. A helical transmembrane segment spans residues 355 to 375 (LYILQIIFGGVDVPAKFITIL). Residues 376 to 386 (SLSYLGRHTTQ) lie on the Cytoplasmic side of the membrane. The helical transmembrane segment at 387 to 407 (AAALLLAGGAILALTFVPLDL) threads the bilayer. Residues 408–471 (QTVRTVLAVF…LVKITGEVQP (64 aa)) are Extracellular-facing. Residues 472–492 (FIPNIIYGITALLGGSAAFFL) form a helical membrane-spanning segment. Over 493–542 (PETLNQPLPETIEDLENWSLRAKKPKQEPEVEKASQRIPLQPHGPGLGSS) the chain is Cytoplasmic. A disordered region spans residues 515-542 (KKPKQEPEVEKASQRIPLQPHGPGLGSS). Residues 517-527 (PKQEPEVEKAS) are compositionally biased toward basic and acidic residues.

This sequence belongs to the major facilitator (TC 2.A.1) superfamily. Organic cation transporter (TC 2.A.1.19) family.

It is found in the basolateral cell membrane. It catalyses the reaction estrone 3-sulfate(out) + glutarate(in) = estrone 3-sulfate(in) + glutarate(out). It carries out the reaction estrone 3-sulfate(in) + 2-oxoglutarate(out) = estrone 3-sulfate(out) + 2-oxoglutarate(in). The enzyme catalyses glutarate(in) + 2-oxoglutarate(out) = glutarate(out) + 2-oxoglutarate(in). The catalysed reaction is urate(in) + 2-oxoglutarate(out) = urate(out) + 2-oxoglutarate(in). It catalyses the reaction taurocholate(out) + glutarate(in) = taurocholate(in) + glutarate(out). It carries out the reaction dehydroepiandrosterone 3-sulfate(out) + glutarate(in) = dehydroepiandrosterone 3-sulfate(in) + glutarate(out). The enzyme catalyses prostaglandin F2alpha(out) + glutarate(in) = prostaglandin F2alpha(in) + glutarate(out). The catalysed reaction is prostaglandin F2alpha(out) + 2-oxoglutarate(in) = prostaglandin F2alpha(in) + 2-oxoglutarate(out). It catalyses the reaction (R)-carnitine(out) + 2-oxoglutarate(in) = (R)-carnitine(in) + 2-oxoglutarate(out). It carries out the reaction glutarate(in) + (R)-carnitine(out) = glutarate(out) + (R)-carnitine(in). The enzyme catalyses prostaglandin E2(out) + 2-oxoglutarate(in) = prostaglandin E2(in) + 2-oxoglutarate(out). The catalysed reaction is prostaglandin E2(out) + glutarate(in) = prostaglandin E2(in) + glutarate(out). It catalyses the reaction urate(in) + glutarate(out) = urate(out) + glutarate(in). It carries out the reaction taurocholate(out) + 2-oxoglutarate(in) = taurocholate(in) + 2-oxoglutarate(out). The enzyme catalyses dehydroepiandrosterone 3-sulfate(out) + 2-oxoglutarate(in) = dehydroepiandrosterone 3-sulfate(in) + 2-oxoglutarate(out). The catalysed reaction is kynurenate(out) + a dicarboxylate(in) = kynurenate(in) + a dicarboxylate(out). It catalyses the reaction (indol-3-yl)acetate(out) + a dicarboxylate(in) = (indol-3-yl)acetate(in) + a dicarboxylate(out). It carries out the reaction indoxyl sulfate(out) + a dicarboxylate(in) = indoxyl sulfate(in) + a dicarboxylate(out). The enzyme catalyses N-benzoylglycine(out) + a dicarboxylate(in) = N-benzoylglycine(in) + a dicarboxylate(out). The catalysed reaction is 3-carboxy-4-methyl-5-propyl-2-furanpropanoate(out) + a dicarboxylate(in) = 3-carboxy-4-methyl-5-propyl-2-furanpropanoate(in) + a dicarboxylate(out). It catalyses the reaction (6R)-L-erythro-5,6,7,8-tetrahydrobiopterin(out) + a dicarboxylate(in) = (6R)-L-erythro-5,6,7,8-tetrahydrobiopterin(in) + a dicarboxylate(out). It carries out the reaction L-erythro-7,8-dihydrobiopterin(out) + a dicarboxylate(in) = L-erythro-7,8-dihydrobiopterin(in) + a dicarboxylate(out). The enzyme catalyses L-sepiapterin(out) + a dicarboxylate(in) = L-sepiapterin(in) + a dicarboxylate(out). Functionally, functions as an organic anion/dicarboxylate exchanger that couples organic anion uptake indirectly to the sodium gradient. Transports organic anions such as estrone 3-sulfate (E1S) and urate in exchange for dicarboxylates such as glutarate or ketoglutarate (2-oxoglutarate). Plays an important role in the excretion of endogenous and exogenous organic anions, especially from the kidney and the brain. E1S transport is pH- and chloride-dependent and may also involve E1S/cGMP exchange. Responsible for the transport of prostaglandin E2 (PGE2) and prostaglandin F2(alpha) (PGF2(alpha)) in the basolateral side of the renal tubule. Involved in the transport of neuroactive tryptophan metabolites kynurenate and xanthurenate. Functions as a biopterin transporters involved in the uptake and the secretion of coenzymes tetrahydrobiopterin (BH4), dihydrobiopterin (BH2) and sepiapterin to urine, thereby determining baseline levels of blood biopterins. May be involved in the basolateral transport of steviol, a metabolite of the popular sugar substitute stevioside. May participate in the detoxification/ renal excretion of drugs and xenobiotics, such as the histamine H(2)-receptor antagonists fexofenadine and cimetidine, the antibiotic benzylpenicillin (PCG), the anionic herbicide 2,4-dichloro-phenoxyacetate (2,4-D), the diagnostic agent p-aminohippurate (PAH), the antiviral acyclovir (ACV), and the mycotoxin ochratoxin (OTA), by transporting these exogenous organic anions across the cell membrane in exchange for dicarboxylates such as 2-oxoglutarate. Contributes to the renal uptake of potent uremic toxins (indoxyl sulfate (IS), indole acetate (IA), hippurate/N-benzoylglycine (HA) and 3-carboxy-4-methyl-5-propyl-2-furanpropionate (CMPF)), pravastatin, PCG, E1S and dehydroepiandrosterone sulfate (DHEAS), and is partly involved in the renal uptake of temocaprilat (an angiotensin-converting enzyme (ACE) inhibitor). May contribute to the release of cortisol in the adrenals. Involved in one of the detoxification systems on the choroid plexus (CP), removes substrates such as E1S or taurocholate (TC), PCG, 2,4-D and PAH, from the cerebrospinal fluid (CSF) to the blood for eventual excretion in urine and bile. Also contributes to the uptake of several other organic compounds such as the prostanoids prostaglandin E(2) and prostaglandin F(2-alpha), L-carnitine, and the therapeutic drugs allopurinol, 6-mercaptopurine (6-MP) and 5-fluorouracil (5-FU). Mediates the transport of PAH, PCG, and the statins pravastatin and pitavastatin, from the cerebrum into the blood circulation across the blood-brain barrier (BBB). In summary, plays a role in the efflux of drugs and xenobiotics, helping reduce their undesired toxicological effects on the body. This Pongo abelii (Sumatran orangutan) protein is Organic anion transporter 3 (SLC22A8).